A 148-amino-acid chain; its full sequence is MQIILLEKVVNLGNLGDIVKVKDGYARNFLIPQRMAKRATPAAMAEFEARRAELEKLAAEKLAAAQAVADKMNGTVVTVARKAGMDGRLFGSVGNADIADALKAAGYVVDKSAVRMPEGPLKAIGEFPLDVALHTDVLANITVAIVAE.

The protein belongs to the bacterial ribosomal protein bL9 family.

In terms of biological role, binds to the 23S rRNA. This chain is Large ribosomal subunit protein bL9, found in Dechloromonas aromatica (strain RCB).